A 335-amino-acid chain; its full sequence is Nucleoid-associated protein KPK_1538 (335 aa).

Belongs to the YejK family.

The protein localises to the cytoplasm. Its subcellular location is the nucleoid. The protein is Nucleoid-associated protein KPK_1538 of Klebsiella pneumoniae (strain 342).